We begin with the raw amino-acid sequence, 507 residues long: Myocyte-specific enhancer factor 2D (507 aa).

In terms of domain architecture, MADS-box spans 3-57 (RKKIQIQRITDERNRQVTFTKRKFGLMKKAYELSVLCDCEIALIIFNHSNKLFQY). Positions 58-86 (ASTDMDKVLLKYTEYNEPHESRTNADIIE) form a DNA-binding region, mef2-type. A phosphoserine mark is found at Ser98, Ser106, Ser110, Ser121, and Ser180. A disordered region spans residues 174 to 207 (TDPRLLSPQQPALQRNSVSPGLPQRPASAGAMLG). The span at 180–192 (SPQQPALQRNSVS) shows a compositional bias: polar residues. Ser190 carries the post-translational modification Phosphoserine; by PKA. A Phosphoserine modification is found at Ser231. Disordered regions lie at residues 244–267 (NKVI…PSRK), 357–392 (WQQP…QQPH), and 423–507 (SIKS…WTLK). Residue Lys245 is modified to N6-acetyllysine. Residue Ser251 is modified to Phosphoserine. A compositionally biased stretch (pro residues) spans 363 to 389 (PQQPQPPQPPQSQPQPPQPQPQQPPQQ). At Lys425 the chain carries N6-acetyllysine; alternate. Residue Lys425 forms a Glycyl lysine isopeptide (Lys-Gly) (interchain with G-Cter in SUMO); alternate linkage. At Ser430 the chain carries Phosphoserine.

As to quaternary structure, forms a complex with class II HDACs in undifferentiating cells. On myogenic differentiation, HDACs are released into the cytoplasm allowing MEF2s to interact with other proteins for activation. Interacts with HDAC4 (in undifferentiating cells); the interaction translocates MEF2D to nuclear dots. Forms a heterodimer with MEF2A. Interacts with MAPK7; the interaction phosphorylates but does not activate MEF2D. Interacts with MYOG. Interacts with CCAR2 and HDAC3. Post-translationally, phosphorylated on Ser-430 by CDK5 is required for Lys-425 sumoylation and inhibits transcriptional activity. In neurons, enhanced CDK5 activity induced by neurotoxins promotes caspase 3-mediated cleavage leading to neuron apoptosis. Phosphorylation on Ser-180 can be enhanced by EGF. Phosphorylated and activated by CaMK4. In terms of processing, acetylated on Lys-425 by CREBBP. Acetylated by EP300. Deacetylated by SIRT1 and HDAC3. Sumoylated on Lys-425 with SUMO2 but not SUMO1; which inhibits transcriptional activity and myogenic activity. Desumoylated by SENP3.

It localises to the nucleus. In terms of biological role, transcriptional activator which binds specifically to the MEF2 element, 5'-YTA[AT](4)TAR-3', found in numerous muscle-specific, growth factor- and stress-induced genes. Mediates cellular functions not only in skeletal and cardiac muscle development, but also in neuronal differentiation and survival. Plays diverse roles in the control of cell growth, survival and apoptosis via p38 MAPK signaling in muscle-specific and/or growth factor-related transcription. Plays a critical role in the regulation of neuronal apoptosis. The protein is Myocyte-specific enhancer factor 2D (Mef2d) of Rattus norvegicus (Rat).